We begin with the raw amino-acid sequence, 248 residues long: Positive alginate biosynthesis regulatory protein (248 aa).

Residues 2–117 (NVLIVDDEPL…DLAEALKKAS (116 aa)) form the Response regulatory domain. Aspartate 54 bears the 4-aspartylphosphate mark. An HTH LytTR-type domain is found at 142 to 247 (ISARTRKGIE…VAGVRRLMHQ (106 aa)).

Its pathway is glycan biosynthesis; alginate biosynthesis [regulation]. Functionally, positive regulator of the algD gene, which codes for a GDP-mannose dehydrogenase, a key step enzyme in the alginate biosynthesis pathway. The chain is Positive alginate biosynthesis regulatory protein (algR) from Pseudomonas aeruginosa (strain ATCC 15692 / DSM 22644 / CIP 104116 / JCM 14847 / LMG 12228 / 1C / PRS 101 / PAO1).